The following is a 357-amino-acid chain: Decorin (357 aa).

Positions 1-16 are cleaved as a signal peptide; sequence MRLVLLFVLLLPVCLA. A propeptide spanning residues 17-30 is cleaved from the precursor; it reads TRFHQKGLFDFMIE. Residue serine 46 is glycosylated (O-linked (Xyl...) (glycosaminoglycan) serine). 2 cysteine pairs are disulfide-bonded: cysteine 52–cysteine 58 and cysteine 56–cysteine 65. 12 LRR repeats span residues 71–91, 92–115, 116–139, 140–160, 161–184, 185–210, 211–231, 232–255, 256–279, 280–302, 303–332, and 333–357; these read ERVPKDLPPDTTLLDLQNNKI, TEIKEGDFKNLKNLHALILVNNKI, SKISPAAFAPLKKLERLYLSKNNL, KELPENMPKSLQEIRAHENEI, SKLRKAVFNGLNQVIVLELGTNPL, KSSGIENGAFQGMKRLSYIRIADTNI, TSIPKGLPPSLTELHLDGNKI, SKIDAEGLSGLTNLAKLGLSFNSI, SSVENGSLNNVPHLRELHLNNNEL, VRVPSGLGEHKYIQVVYLHNNKI, ASIGINDFCPLGYNTKKATYSGVSLFSNPV, and QYWEIQPSAFRCIHERSAVQIGNYK. A glycan (N-linked (GlcNAc...) asparagine) is linked at asparagine 209. The N-linked (GlcNAc...) asparagine glycan is linked to asparagine 260. Residues cysteine 311 and cysteine 344 are joined by a disulfide bond.

The protein belongs to the small leucine-rich proteoglycan (SLRP) family. SLRP class I subfamily. In terms of assembly, binds to type I and type II collagen, to fibronectin and TGF-beta. Forms a ternary complex with MFAP2 and ELN. In terms of processing, the attached glycosaminoglycan chain can be either chondroitin sulfate or dermatan sulfate depending upon the tissue of origin.

It is found in the secreted. Its subcellular location is the extracellular space. The protein localises to the extracellular matrix. May affect the rate of fibrils formation. This is Decorin (DCN) from Gallus gallus (Chicken).